Reading from the N-terminus, the 147-residue chain is Protein phosphatase 1 regulatory subunit 14B (147 aa).

The tract at residues 1–55 is disordered; sequence MADSGTAGGAALAAPAPGPGSGGPGPRVYFQSPPGAAGEGPGGADDEGPVRRQGK. N-acetylalanine is present on A2. A Phosphoserine modification is found at S21. Y29 carries the post-translational modification Phosphotyrosine. Position 32 is a phosphoserine (S32). Position 57 is a phosphothreonine (T57). Residues 61–103 are a coiled coil; sequence DRKELRKRLNLEEWILEQLTRLYDCQEEEIPELEIDVDELLDM.

The protein belongs to the PP1 inhibitor family. In terms of processing, phosphorylated primarily on Thr-57 by PKC (in vitro). An unknown Ser is also phosphorylated by PKC (in vitro). As to expression, ubiquitous. Expressed at low levels.

It localises to the cytoplasm. Inhibitor of PPP1CA. Has over 50-fold higher inhibitory activity when phosphorylated. This chain is Protein phosphatase 1 regulatory subunit 14B (PPP1R14B), found in Homo sapiens (Human).